The sequence spans 354 residues: Protein C42 (354 aa).

The Nuclear localization signal signature appears at 349-352 (KRKK).

Belongs to the baculoviridae C42 protein family.

It localises to the host nucleus. The polypeptide is Protein C42 (Orgyia pseudotsugata (Douglas-fir tussock moth)).